The sequence spans 237 residues: Demethylmenaquinone methyltransferase (237 aa).

Residues T58, D79, and 106 to 107 (NA) each bind S-adenosyl-L-methionine.

It belongs to the class I-like SAM-binding methyltransferase superfamily. MenG/UbiE family.

It catalyses the reaction a 2-demethylmenaquinol + S-adenosyl-L-methionine = a menaquinol + S-adenosyl-L-homocysteine + H(+). Its pathway is quinol/quinone metabolism; menaquinone biosynthesis; menaquinol from 1,4-dihydroxy-2-naphthoate: step 2/2. Functionally, methyltransferase required for the conversion of demethylmenaquinol (DMKH2) to menaquinol (MKH2). The protein is Demethylmenaquinone methyltransferase of Bacillus cereus (strain ATCC 10987 / NRS 248).